A 331-amino-acid polypeptide reads, in one-letter code: MEVPSAVTLNNYVGFDSITSQINRKLIRRGFQFNVMVVGPSGSGKSTLINTLFSAHLMDSKGRLDYQAPYRQTTEIHVTSQVVRENRVQLQLNLIDTPGYGDQINNDKCWEPIIKYIRDQHSSYLRRELNSHREKRLQDTRVHCCLFFIRPTGHSLRPIDIAVLKRLTEVVNVVPVIAKSDSLTLEERAAFKQQIREEFVKHDINLYPYDSDDADEEEINLNAAVRNLIPFAVVGSEKAIIVDGRPIRGRQNRWGVVNVDDENHCEFVFLRNFLMRTHLQDLIETTSYYHYEKFRFKQLSSLKEQSSLATRMGSPAPVYPSEPHLHTATAQ.

A Septin-type G domain is found at 29-301; it reads RGFQFNVMVV…EKFRFKQLSS (273 aa). The G1 motif stretch occupies residues 39–46; sequence GPSGSGKS. Residues 39 to 46, Thr-73, Gly-99, 179 to 187, Gly-235, and Arg-250 each bind GTP; these read GPSGSGKS and KSDSLTLEE. The interval 96-99 is G3 motif; it reads DTPG. Residues 178–181 form a G4 motif region; it reads AKSD. Positions 311 to 331 are disordered; sequence RMGSPAPVYPSEPHLHTATAQ.

The protein belongs to the TRAFAC class TrmE-Era-EngA-EngB-Septin-like GTPase superfamily. Septin GTPase family. As to quaternary structure, component of the septin complex composed of two copies of each spn1, spn2, spn3 and spn4. Component of the sporulation-specific septin complex composed of at least spn2, spn5, spn6 and spn7.

The protein resides in the cytoplasm. It localises to the cell cortex. The protein localises to the forespore membrane. Its function is as follows. Plays a role in the cell cycle. Involved in a late stage of septum formation leading to the separation of the daughter cells. Involved in the correct orientation of forespore membrane extension during sporulation. Binds phosphatidylinositol 4-phosphate. This is Septin homolog spn2 (spn2) from Schizosaccharomyces pombe (strain 972 / ATCC 24843) (Fission yeast).